Reading from the N-terminus, the 713-residue chain is Polyribonucleotide nucleotidyltransferase (713 aa).

Mg(2+)-binding residues include Asp485 and Asp491. Positions 552 to 611 (PRIHTIKINPEKIKDVIGKGGSVIRALTEETGTNIELDDDGTVRISAVANEAAMEAIRRI) constitute a KH domain. The 69-residue stretch at 621 to 689 (NRIYEGKVVR…RQGRVRLSIK (69 aa)) folds into the S1 motif domain.

It belongs to the polyribonucleotide nucleotidyltransferase family. Component of the RNA degradosome, which is a multiprotein complex involved in RNA processing and mRNA degradation. The cofactor is Mg(2+).

The protein resides in the cytoplasm. The enzyme catalyses RNA(n+1) + phosphate = RNA(n) + a ribonucleoside 5'-diphosphate. Functionally, involved in mRNA degradation. Catalyzes the phosphorolysis of single-stranded polyribonucleotides processively in the 3'- to 5'-direction. This Aeromonas salmonicida (strain A449) protein is Polyribonucleotide nucleotidyltransferase.